Reading from the N-terminus, the 451-residue chain is UPF0210 protein Cbei_2352 (451 aa).

This sequence belongs to the UPF0210 family. In terms of assembly, homodimer.

The polypeptide is UPF0210 protein Cbei_2352 (Clostridium beijerinckii (strain ATCC 51743 / NCIMB 8052) (Clostridium acetobutylicum)).